A 466-amino-acid polypeptide reads, in one-letter code: Zinc metalloproteinase/disintegrin (466 aa).

A signal peptide spans 1-6 (FPYQGS). Residues 7-174 (SIILESGNVN…PIKKASQLIV (168 aa)) constitute a propeptide that is removed on maturation. The Peptidase M12B domain occupies 180-377 (RYMEIVIVVD…ENPPCILNKP (198 aa)). Residues E183 and D267 each coordinate Ca(2+). Disulfide bonds link C291–C372, C331–C356, and C333–C339. H316 contacts Zn(2+). E317 is an active-site residue. Zn(2+) contacts are provided by H320 and H326. Residues C372 and N375 each coordinate Ca(2+). The propeptide occupies 377–401 (PLRTDTVSTPVSGNELLEAGKDYDR). Residues 385 to 466 (TPVSGNELLE…GDCPRNPYHA (82 aa)) enclose the Disintegrin domain. Intrachain disulfides connect C422–C428, C427–C452, and C440–C459. The Cell attachment site signature appears at 444 to 446 (RGD).

This sequence belongs to the venom metalloproteinase (M12B) family. P-II subfamily. P-IIa sub-subfamily. In terms of assembly, monomer. It depends on Zn(2+) as a cofactor. In terms of tissue distribution, expressed by the venom gland.

The protein localises to the secreted. Impairs hemostasis in the envenomed animal. In terms of biological role, inhibits platelet aggregation induced by ADP, thrombin, platelet-activating factor and collagen. Acts by inhibiting fibrinogen interaction with platelet receptors GPIIb/GPIIIa (ITGA2B/ITGB3). In Deinagkistrodon acutus (Hundred-pace snake), this protein is Zinc metalloproteinase/disintegrin.